The following is a 643-amino-acid chain: MVAISLPDGSVRSYEGPVTGRQIAEDIGPGLAKAALAVTIDGTMKDLSVPITTDASVSLITARDAAALELLRHDAAHVMAQAVQELYPGTQVTIGPAIENGFYYDFARAEPFTPEDLERIEERMREIVGRDLPIVREVWERDEAIAYFTKLGETYKAELITGLPANEDVSVYRQGDWLDLCRGPHLPSTGKLGTAFKLMKLAGAYWRGDSRNPMLQRIYGTAWPDRKQLDAYLTMLAEAEKRDHRRVGQEMDLFHLQEEAQGAVFWHPKGWTVYRTLQNYMRRRLDLAGYVEVNTPMLVDRALWEKSGHWEKFRQNMFISEAEDKLLAMKPMNCPCHIQIFKQGIKSYRDLPLRMAEFGACHRNEASGALHGLMRVRAFVQDDAHIFCTEDQIVSETQAFCDLLKSVYRDLGFTEIKVKFSDRPEVRAGSDETWDKAEAALREATDAAGLEWTLNPGEGAFYGPKLEFVLRDAIGRDWQCGTLQVDFVLPERLGADYVGEDGDKHRPVMLHRAILGTFERFMGILIENCAGRFPFWLAPVQVVVATITSDADDYARTVLAALKAKGLRAVADLRNEKINYKVREHSLAKVPVMLVVGRKEAETGGVALRRLGGQSQEVLALDEAIATLANESVAPDLRAAPQG.

The TGS domain occupies 1-61 (MVAISLPDGS…TTDASVSLIT (61 aa)). The interval 243-534 (DHRRVGQEMD…LIENCAGRFP (292 aa)) is catalytic. Zn(2+) contacts are provided by Cys334, His385, and His511.

Belongs to the class-II aminoacyl-tRNA synthetase family. Homodimer. Requires Zn(2+) as cofactor.

It is found in the cytoplasm. It carries out the reaction tRNA(Thr) + L-threonine + ATP = L-threonyl-tRNA(Thr) + AMP + diphosphate + H(+). Catalyzes the attachment of threonine to tRNA(Thr) in a two-step reaction: L-threonine is first activated by ATP to form Thr-AMP and then transferred to the acceptor end of tRNA(Thr). Also edits incorrectly charged L-seryl-tRNA(Thr). The polypeptide is Threonine--tRNA ligase (Rhodospirillum rubrum (strain ATCC 11170 / ATH 1.1.1 / DSM 467 / LMG 4362 / NCIMB 8255 / S1)).